The chain runs to 62 residues: Sec-independent protein translocase protein TatA (62 aa).

The helical transmembrane segment at 10–32 threads the bilayer; it reads LLIILIIVIAIFGAGKLAGLGGA.

The protein belongs to the TatA/E family. Forms a complex with TatC.

The protein resides in the cell membrane. Part of the twin-arginine translocation (Tat) system that transports large folded proteins containing a characteristic twin-arginine motif in their signal peptide across membranes. TatA could form the protein-conducting channel of the Tat system. This Chloroflexus aurantiacus (strain ATCC 29366 / DSM 635 / J-10-fl) protein is Sec-independent protein translocase protein TatA.